Reading from the N-terminus, the 681-residue chain is Macrolide export ATP-binding/permease protein MacB (681 aa).

In terms of domain architecture, ABC transporter spans 6-244 (LKLAAVTRRF…FAEVGVGAAA (239 aa)). 42-49 (GASGSGKS) provides a ligand contact to ATP. Residues 246–274 (TETAADTRSAPASGDAPPPANNDTAADPA) are disordered. Transmembrane regions (helical) follow at residues 306–326 (LLTM…VAVG), 554–574 (LTLL…IGVM), 611–631 (LVCL…GALF), and 644–664 (AGAI…FGFM).

Belongs to the ABC transporter superfamily. Macrolide exporter (TC 3.A.1.122) family. In terms of assembly, homodimer.

Its subcellular location is the cell inner membrane. Functionally, non-canonical ABC transporter that contains transmembrane domains (TMD), which form a pore in the inner membrane, and an ATP-binding domain (NBD), which is responsible for energy generation. Confers resistance against macrolides. In Burkholderia cenocepacia (strain HI2424), this protein is Macrolide export ATP-binding/permease protein MacB.